The primary structure comprises 113 residues: uncharacterized protein (113 aa).

The SWIM-type zinc finger occupies 49-91; that stretch reads FFVVVGKEEYVVEGGFCTCPDFLVNLKGKSPCAHIIAVEVAKI.

This is an uncharacterized protein from Archaeoglobus fulgidus (strain ATCC 49558 / DSM 4304 / JCM 9628 / NBRC 100126 / VC-16).